Reading from the N-terminus, the 412-residue chain is Sterol-4-alpha-carboxylate 3-dehydrogenase erg26, decarboxylating (412 aa).

NADP(+) is bound by residues 17-23, 89-90, and 111-113; these read GGCGFLG, DI, and TAT. Residues Ser-158 and Tyr-188 each coordinate substrate. NADP(+) is bound by residues Tyr-188, Lys-192, and 217 to 220; that span reads PAGI. Lys-192 functions as the Proton donor in the catalytic mechanism.

Belongs to the 3-beta-HSD family. Heterotetramer of erg25, erg26, erg27 and erg28. Erg28 acts as a scaffold to tether erg27 and other 4,4-demethylation-related enzymes, forming a demethylation enzyme complex, in the endoplasmic reticulum.

Its subcellular location is the endoplasmic reticulum membrane. The protein operates within steroid metabolism; ergosterol biosynthesis. In terms of biological role, sterol-C4-methyl oxidase; part of the third module of ergosterol biosynthesis pathway that includes the late steps of the pathway. Erg26 is a catalytic component of the C-4 demethylation complex that catalyzes the conversion of 4,4-dimethylfecosterol into fecosterol via 4-methylfecosterol. The third module or late pathway involves the ergosterol synthesis itself through consecutive reactions that mainly occur in the endoplasmic reticulum (ER) membrane. Firstly, the squalene synthase erg9 catalyzes the condensation of 2 farnesyl pyrophosphate moieties to form squalene, which is the precursor of all steroids. Squalene synthase is crucial for balancing the incorporation of farnesyl diphosphate (FPP) into sterol and nonsterol isoprene synthesis. Secondly, squalene is converted into lanosterol by the consecutive action of the squalene epoxidase erg1 and the lanosterol synthase erg7. Then, the delta(24)-sterol C-methyltransferase erg6 methylates lanosterol at C-24 to produce eburicol. Eburicol is the substrate of the sterol 14-alpha demethylase encoded by cyp51A and cyp51B, to yield 4,4,24-trimethyl ergosta-8,14,24(28)-trienol. The C-14 reductase erg24 then reduces the C14=C15 double bond which leads to 4,4-dimethylfecosterol. A sequence of further demethylations at C-4, involving the C-4 demethylation complex containing the C-4 methylsterol oxidases erg25A or erg25B, the sterol-4-alpha-carboxylate 3-dehydrogenase erg26 and the 3-keto-steroid reductase erg27, leads to the production of fecosterol via 4-methylfecosterol. The C-8 sterol isomerase erg2 then catalyzes the reaction which results in unsaturation at C-7 in the B ring of sterols and thus converts fecosterol to episterol. The sterol-C5-desaturase erg3B then catalyzes the introduction of a C-5 double bond in the B ring to produce 5-dehydroepisterol. The 2 other sterol-C5-desaturases, erg3A and erg3C, seem to be less important in ergosterol biosynthesis. The C-22 sterol desaturase erg5 further converts 5-dehydroepisterol into ergosta-5,7,22,24(28)-tetraen-3beta-ol by forming the C-22(23) double bond in the sterol side chain. Finally, ergosta-5,7,22,24(28)-tetraen-3beta-ol is substrate of the C-24(28) sterol reductases erg4A and erg4B to produce ergosterol. Possible alternative sterol biosynthetic pathways might exist from fecosterol to ergosterol, depending on the activities of the erg3 isoforms. This is Sterol-4-alpha-carboxylate 3-dehydrogenase erg26, decarboxylating from Aspergillus fumigatus (strain ATCC MYA-4609 / CBS 101355 / FGSC A1100 / Af293) (Neosartorya fumigata).